A 353-amino-acid polypeptide reads, in one-letter code: Phosphoribosylformylglycinamidine cyclo-ligase (353 aa).

It belongs to the AIR synthase family.

The protein localises to the cytoplasm. The enzyme catalyses 2-formamido-N(1)-(5-O-phospho-beta-D-ribosyl)acetamidine + ATP = 5-amino-1-(5-phospho-beta-D-ribosyl)imidazole + ADP + phosphate + H(+). Its pathway is purine metabolism; IMP biosynthesis via de novo pathway; 5-amino-1-(5-phospho-D-ribosyl)imidazole from N(2)-formyl-N(1)-(5-phospho-D-ribosyl)glycinamide: step 2/2. The polypeptide is Phosphoribosylformylglycinamidine cyclo-ligase (Ralstonia nicotianae (strain ATCC BAA-1114 / GMI1000) (Ralstonia solanacearum)).